Reading from the N-terminus, the 131-residue chain is MDFQQLADVAEKWCSNTPFELIATEETERRMDFYADPGVSFYVLCPDNGCGDNFHVWSESEDCLPFLQLAQDYISSCGKKTLHEVLEKVFKSFRPLLGLPDADDDAFEEYSADVEEEEPEADHPQMGVSQQ.

A Phosphotyrosine modification is found at Y34. Residues F107–E120 show a composition bias toward acidic residues. The tract at residues F107–Q131 is disordered.

This sequence belongs to the MTURN family. Post-translationally, phosphorylation at Tyr-34 is essential for its ability to promote megakaryocyte differentiation.

Its subcellular location is the cytoplasm. Its function is as follows. Promotes megakaryocyte differentiation by enhancing ERK and JNK signaling as well as up-regulating RUNX1 and FLI1 expression. Represses NF-kappa-B transcriptional activity by inhibiting phosphorylation of RELA at 'Ser- 536'. May be involved in early neuronal development. The polypeptide is Maturin (MTURN) (Bos taurus (Bovine)).